The chain runs to 207 residues: Large ribosomal subunit protein uL4 (207 aa).

Polar residues predominate over residues 45–57 (RQGTHSVKNRSTV). The segment at 45–77 (RQGTHSVKNRSTVSGGGRKPWRQKGTGNARQGS) is disordered.

This sequence belongs to the universal ribosomal protein uL4 family. In terms of assembly, part of the 50S ribosomal subunit.

Its function is as follows. One of the primary rRNA binding proteins, this protein initially binds near the 5'-end of the 23S rRNA. It is important during the early stages of 50S assembly. It makes multiple contacts with different domains of the 23S rRNA in the assembled 50S subunit and ribosome. Forms part of the polypeptide exit tunnel. The protein is Large ribosomal subunit protein uL4 of Oenococcus oeni (strain ATCC BAA-331 / PSU-1).